We begin with the raw amino-acid sequence, 1034 residues long: Receptor-type guanylate cyclase gcy-25 (1034 aa).

An N-terminal signal peptide occupies residues 1-16 (MLLLLLLLKISTFVDS). Residues 17 to 409 (FQIGHLEFEN…YDNNLCSDFH (393 aa)) lie on the Extracellular side of the membrane. N-linked (GlcNAc...) asparagine glycans are attached at residues Asn-28, Asn-224, Asn-301, Asn-308, and Asn-373. Residues 410 to 430 (VFMIAAIVFSILLIPMAIAFY) form a helical membrane-spanning segment. Residues 431-1034 (LQRKEHLIQQ…DNSKKMFLNV (604 aa)) are Cytoplasmic-facing. Residues 464-749 (RVSTISTARA…KITDAVNREF (286 aa)) enclose the Protein kinase domain. Residues 470-478 (TARASYSSI) and Lys-497 contribute to the ATP site. Residues 758–785 (IDQMIEMIDEYSANLEQIVAERTRELEQ) are a coiled coil. In terms of domain architecture, Guanylate cyclase spans 821–951 (TLLVVDVCQF…DTVNMACRMA (131 aa)).

This sequence belongs to the adenylyl cyclase class-4/guanylyl cyclase family. As to expression, expressed in AQR, PQR and URX sensory neurons.

Its subcellular location is the cell membrane. It carries out the reaction GTP = 3',5'-cyclic GMP + diphosphate. Its function is as follows. Guanylate cyclase involved in the production of the second messenger cGMP. The protein is Receptor-type guanylate cyclase gcy-25 of Caenorhabditis elegans.